A 1060-amino-acid chain; its full sequence is Carbamoyl phosphate synthase large chain (1060 aa).

Positions 1–401 are carboxyphosphate synthetic domain; that stretch reads MPKRTDIRKI…SLLKACRSLE (401 aa). Arg129, Arg169, Gly175, Gly176, Arg208, Ile210, Glu215, Gly241, Ile242, His243, Gln284, and Glu298 together coordinate ATP. One can recognise an ATP-grasp 1 domain in the interval 133–327; it reads KQLMEELNQP…IAKLAAKIAV (195 aa). Positions 284, 298, and 300 each coordinate Mg(2+). Mn(2+)-binding residues include Gln284, Glu298, and Asn300. The oligomerization domain stretch occupies residues 402 to 546; that stretch reads IGVDHIKIAD…YSTYAVENES (145 aa). Residues 547–929 are carbamoyl phosphate synthetic domain; sequence LISDKASILV…ALYKAFEAAY (383 aa). Positions 671–861 constitute an ATP-grasp 2 domain; that stretch reads EATLQALNIP…MAQVATKVIL (191 aa). ATP contacts are provided by Arg707, Ala746, Leu748, Glu752, Gly777, Val778, His779, Ser780, Gln820, and Glu832. Gln820, Glu832, and Asn834 together coordinate Mg(2+). Mn(2+)-binding residues include Gln820, Glu832, and Asn834. The region spanning 930-1060 is the MGS-like domain; that stretch reads LHMPDYGNIV…SRAFTLKVLD (131 aa). The segment at 930–1060 is allosteric domain; that stretch reads LHMPDYGNIV…SRAFTLKVLD (131 aa).

The protein belongs to the CarB family. As to quaternary structure, composed of two chains; the small (or glutamine) chain promotes the hydrolysis of glutamine to ammonia, which is used by the large (or ammonia) chain to synthesize carbamoyl phosphate. Tetramer of heterodimers (alpha,beta)4. It depends on Mg(2+) as a cofactor. Mn(2+) serves as cofactor.

The catalysed reaction is hydrogencarbonate + L-glutamine + 2 ATP + H2O = carbamoyl phosphate + L-glutamate + 2 ADP + phosphate + 2 H(+). It carries out the reaction hydrogencarbonate + NH4(+) + 2 ATP = carbamoyl phosphate + 2 ADP + phosphate + 2 H(+). It participates in amino-acid biosynthesis; L-arginine biosynthesis; carbamoyl phosphate from bicarbonate: step 1/1. Its pathway is pyrimidine metabolism; UMP biosynthesis via de novo pathway; (S)-dihydroorotate from bicarbonate: step 1/3. Its function is as follows. Large subunit of the glutamine-dependent carbamoyl phosphate synthetase (CPSase). CPSase catalyzes the formation of carbamoyl phosphate from the ammonia moiety of glutamine, carbonate, and phosphate donated by ATP, constituting the first step of 2 biosynthetic pathways, one leading to arginine and/or urea and the other to pyrimidine nucleotides. The large subunit (synthetase) binds the substrates ammonia (free or transferred from glutamine from the small subunit), hydrogencarbonate and ATP and carries out an ATP-coupled ligase reaction, activating hydrogencarbonate by forming carboxy phosphate which reacts with ammonia to form carbamoyl phosphate. This chain is Carbamoyl phosphate synthase large chain, found in Streptococcus agalactiae serotype V (strain ATCC BAA-611 / 2603 V/R).